Consider the following 295-residue polypeptide: CRISPR system Cmr endoribonuclease Cmr4 (295 aa).

Belongs to the CRISPR system Cmr4 family. As to quaternary structure, forms oligomers in isolation. Part of the type III-B Cmr ribonucleoprotein (RNP) complex, an elongated RNP with Cmr2 and Cmr3 as the base, with Cmr4 and Cmr5 forming a helical core along the mature crRNA (39 or 45 nt in length), while the complex is capped by Cmr6 and Cmr1. The 5' end of the crRNA is bound to Cmr2 and Cmr3, while Cmr6 and a Cmr1 subunit (Cmr1-1 or Cmr1-2) cap the 3' end of the crRNA. The target RNA lies anti-parallel to the crRNA, with its 5' end near Cmr1 and Cmr6 and its 3' end near Cmr2 and Cmr3; major target RNA cleavage occurs nears the junction of Cmr1/Cmr6 and Cmr4/Cmr5, with minor cleavage occurring at 6 nt intervals which coincide with the proposed spacing of Cmr4 subunits. Interacts with Cmr5. Interacts with Cmr2, Cmr3, Cmr5 and Cmr6.

Its subcellular location is the cytoplasm. In terms of biological role, CRISPR (clustered regularly interspaced short palindromic repeat), is an adaptive immune system that provides protection against mobile genetic elements (viruses, transposable elements and conjugative plasmids). CRISPR clusters contain sequences complementary to antecedent mobile elements and target invading nucleic acids. CRISPR clusters are transcribed and processed into CRISPR RNA (crRNA), formerly called psiRNA (prokaryotic silencing) in this organism. Part of the Cmr ribonucleoprotein complex which has divalent cation-dependent endoribonuclease activity specific for ssRNA complementary to the crRNA (target RNA), generating 5' hydroxy- and 3' phosphate or 2'-3' cyclic phosphate termini. This is probably the subunit that cleaves the target RNA. Cmr complex does not cleave ssDNA complementary to the crRNA. Cleavage of target RNA is guided by the crRNA; substrate cleavage occurs a fixed distance (14 nt) from the 3' end of the crRNA. In vitro reconstitution shows Cmr1-2 and Cmr5 are not absolutely necessary for target cleavage. In Pyrococcus furiosus (strain ATCC 43587 / DSM 3638 / JCM 8422 / Vc1), this protein is CRISPR system Cmr endoribonuclease Cmr4.